The sequence spans 89 residues: UPF0237 protein CA_C0478 (89 aa).

Positions 4–78 (IITVIGKDKV…KKLGVSIKIQ (75 aa)) constitute an ACT domain.

This sequence belongs to the UPF0237 family.

This Clostridium acetobutylicum (strain ATCC 824 / DSM 792 / JCM 1419 / IAM 19013 / LMG 5710 / NBRC 13948 / NRRL B-527 / VKM B-1787 / 2291 / W) protein is UPF0237 protein CA_C0478.